The sequence spans 102 residues: ATP-dependent Clp protease adapter protein ClpS (102 aa).

This sequence belongs to the ClpS family. As to quaternary structure, binds to the N-terminal domain of the chaperone ClpA.

In terms of biological role, involved in the modulation of the specificity of the ClpAP-mediated ATP-dependent protein degradation. The sequence is that of ATP-dependent Clp protease adapter protein ClpS from Shewanella halifaxensis (strain HAW-EB4).